The primary structure comprises 446 residues: Light-independent protochlorophyllide reductase subunit N (446 aa).

Cys22, Cys47, and Cys107 together coordinate [4Fe-4S] cluster.

This sequence belongs to the BchN/ChlN family. In terms of assembly, protochlorophyllide reductase is composed of three subunits; ChlL, ChlN and ChlB. Forms a heterotetramer of two ChlB and two ChlN subunits. The cofactor is [4Fe-4S] cluster.

The protein resides in the plastid. It is found in the chloroplast. The catalysed reaction is chlorophyllide a + oxidized 2[4Fe-4S]-[ferredoxin] + 2 ADP + 2 phosphate = protochlorophyllide a + reduced 2[4Fe-4S]-[ferredoxin] + 2 ATP + 2 H2O. The protein operates within porphyrin-containing compound metabolism; chlorophyll biosynthesis (light-independent). Functionally, component of the dark-operative protochlorophyllide reductase (DPOR) that uses Mg-ATP and reduced ferredoxin to reduce ring D of protochlorophyllide (Pchlide) to form chlorophyllide a (Chlide). This reaction is light-independent. The NB-protein (ChlN-ChlB) is the catalytic component of the complex. The polypeptide is Light-independent protochlorophyllide reductase subunit N (Mesostigma viride (Green alga)).